Here is a 398-residue protein sequence, read N- to C-terminus: Basic helix-loop-helix neural transcription factor TAP (398 aa).

Disordered regions lie at residues 35 to 59 (ETEA…IPQP) and 102 to 144 (RATN…RSRS). Over residues 127-141 (RPKRKYAVGKNRVTR) the composition is skewed to basic residues. The 53-residue stretch at 154–206 (FRRMKANDRERNRMHNLNDALEKLRVTLPSLPEETKLTKIEILRFAHNYIFAL) folds into the bHLH domain. 2 disordered regions span residues 265–333 (AQHQ…QQFS) and 361–398 (QQSS…APQV). Positions 307-333 (HQQQQQPHQPHHLQPNPQQESSPQQFS) are enriched in low complexity. The segment covering 361–370 (QQSSFYSQTP) has biased composition (polar residues).

As to expression, expressed in neuronal and glial precursors during differentiation. In the peripheral nervous system, expression is exclusively in one of the neurons that innervate each larval chemosensory organ. Expressed at a late stage in the development of one type of adult chemosensory organ, the gustatory bristles of the leg, wing and proboscis. Expressed very early in the development of a second type of chemosensory receptors, the olfactory organs of the antenna.

The protein resides in the nucleus. Its function is as follows. May play a role in the specification of the sugar-sensitive adult gustatory neuron and affect the response to sugar and salt. Regulated by POXN. In Drosophila melanogaster (Fruit fly), this protein is Basic helix-loop-helix neural transcription factor TAP (tap).